We begin with the raw amino-acid sequence, 152 residues long: MSEKYIVTWDMLQIHARKLASRLMPSEQWKGIIAVSRGGLVPGALLARELGIRHVDTVCISSYDHDNQRELKVLKRAEGDGEGFIIIDDLVDTGGTAVAIREMYPKAHFVTIFAKPAGRPLVDDYVIDIPQNTWIEQPWDMGVVFVPPISGR.

Residues arginine 37–glycine 38, arginine 69, and aspartate 88–threonine 96 contribute to the 5-phospho-alpha-D-ribose 1-diphosphate site. Arginine 69 serves as a coordination point for GMP. Aspartate 89 lines the Mg(2+) pocket. Guanine-binding residues include aspartate 92 and isoleucine 135. 2 residues coordinate xanthine: aspartate 92 and isoleucine 135. Residues aspartate 92–threonine 96 and tryptophan 134–isoleucine 135 contribute to the GMP site.

This sequence belongs to the purine/pyrimidine phosphoribosyltransferase family. XGPT subfamily. As to quaternary structure, homotetramer. Requires Mg(2+) as cofactor.

It localises to the cell inner membrane. It catalyses the reaction GMP + diphosphate = guanine + 5-phospho-alpha-D-ribose 1-diphosphate. The catalysed reaction is XMP + diphosphate = xanthine + 5-phospho-alpha-D-ribose 1-diphosphate. It carries out the reaction IMP + diphosphate = hypoxanthine + 5-phospho-alpha-D-ribose 1-diphosphate. The protein operates within purine metabolism; GMP biosynthesis via salvage pathway; GMP from guanine: step 1/1. Its pathway is purine metabolism; XMP biosynthesis via salvage pathway; XMP from xanthine: step 1/1. In terms of biological role, purine salvage pathway enzyme that catalyzes the transfer of the ribosyl-5-phosphate group from 5-phospho-alpha-D-ribose 1-diphosphate (PRPP) to the N9 position of the 6-oxopurines guanine and xanthine to form the corresponding ribonucleotides GMP (guanosine 5'-monophosphate) and XMP (xanthosine 5'-monophosphate), with the release of PPi. To a lesser extent, also acts on hypoxanthine. In Escherichia fergusonii (strain ATCC 35469 / DSM 13698 / CCUG 18766 / IAM 14443 / JCM 21226 / LMG 7866 / NBRC 102419 / NCTC 12128 / CDC 0568-73), this protein is Xanthine-guanine phosphoribosyltransferase.